A 349-amino-acid polypeptide reads, in one-letter code: tRNA pseudouridine synthase D (349 aa).

Phenylalanine 27 lines the substrate pocket. The active-site Nucleophile is the aspartate 80. Asparagine 129 serves as a coordination point for substrate. The 149-residue stretch at 155–303 folds into the TRUD domain; the sequence is GVPNYFGAQR…VEAARRAMLL (149 aa). Phenylalanine 329 contacts substrate.

The protein belongs to the pseudouridine synthase TruD family.

The enzyme catalyses uridine(13) in tRNA = pseudouridine(13) in tRNA. In terms of biological role, responsible for synthesis of pseudouridine from uracil-13 in transfer RNAs. The protein is tRNA pseudouridine synthase D of Shigella sonnei (strain Ss046).